The sequence spans 134 residues: Calcitonin gene-related peptide 2 (134 aa).

Positions 1-26 (MDFWKFFPFLALSSMWVLCLASSLQA) are cleaved as a signal peptide. Residues 27–86 (APFRSALESSLDLGTLSDQEKHLLLAALIQDYEQKARKLEQEEQETEGSRKGSSSSVISQ) constitute a propeptide that is removed on maturation. Residues 65–91 (LEQEEQETEGSRKGSSSSVISQKRSCN) form a disordered region. Residues 77 to 89 (KGSSSSVISQKRS) show a composition bias toward low complexity. A disulfide bond links Cys90 and Cys95. Phe125 carries the post-translational modification Phenylalanine amide. A propeptide spanning residues 131–134 (DLRV) is cleaved from the precursor.

It belongs to the calcitonin family.

It localises to the secreted. Its function is as follows. CALCB/CGRP2 is a peptide hormone that induces vasodilation mediated by the CALCRL-RAMP1 receptor complex. Dilates a variety of vessels including the coronary, cerebral and systemic vasculature. Its abundance in the CNS also points toward a neurotransmitter or neuromodulator role. This is Calcitonin gene-related peptide 2 from Rattus norvegicus (Rat).